Here is a 316-residue protein sequence, read N- to C-terminus: tRNA-cytidine(32) 2-sulfurtransferase (316 aa).

The PP-loop motif motif lies at 52-57 (SGGKDS). [4Fe-4S] cluster contacts are provided by Cys-127, Cys-130, and Cys-218.

Belongs to the TtcA family. Homodimer. Requires Mg(2+) as cofactor. [4Fe-4S] cluster serves as cofactor.

The protein resides in the cytoplasm. The catalysed reaction is cytidine(32) in tRNA + S-sulfanyl-L-cysteinyl-[cysteine desulfurase] + AH2 + ATP = 2-thiocytidine(32) in tRNA + L-cysteinyl-[cysteine desulfurase] + A + AMP + diphosphate + H(+). Its pathway is tRNA modification. Its function is as follows. Catalyzes the ATP-dependent 2-thiolation of cytidine in position 32 of tRNA, to form 2-thiocytidine (s(2)C32). The sulfur atoms are provided by the cysteine/cysteine desulfurase (IscS) system. The chain is tRNA-cytidine(32) 2-sulfurtransferase from Haemophilus ducreyi (strain 35000HP / ATCC 700724).